The following is a 466-amino-acid chain: Neuropeptide Y receptor type 5 (466 aa).

Topologically, residues M1 to Y63 are extracellular. N-linked (GlcNAc...) asparagine glycans are attached at residues N10, N17, N38, and N39. The helical transmembrane segment at F64–L84 threads the bilayer. Topologically, residues M85–N98 are cytoplasmic. The helical transmembrane segment at F99 to T119 threads the bilayer. Topologically, residues L120 to M138 are extracellular. C135 and C219 are oxidised to a cystine. Residues P139–V159 traverse the membrane as a helical segment. Residues R160–G177 lie on the Cytoplasmic side of the membrane. A helical transmembrane segment spans residues Y178 to F198. Residues H199 to R229 are Extracellular-facing. A helical transmembrane segment spans residues I230–V250. Residues S251–R389 lie on the Cytoplasmic side of the membrane. The segment at G323–S346 is disordered. A helical transmembrane segment spans residues L390–V410. At T411–Y427 the chain is on the extracellular side. Residues C428–L448 traverse the membrane as a helical segment. The Cytoplasmic segment spans residues N449–S466. The S-palmitoyl cysteine moiety is linked to residue C462.

It belongs to the G-protein coupled receptor 1 family.

The protein resides in the cell membrane. Functionally, receptor for neuropeptide Y and peptide YY. The activity of this receptor is mediated by G proteins that inhibit adenylate cyclase activity. Seems to be associated with food intake. Could be involved in feeding disorders. The protein is Neuropeptide Y receptor type 5 (Npy5r) of Mus musculus (Mouse).